The chain runs to 287 residues: MFARLPLYLRLVRMDKPIGSLLLLWPTLNALWIASDGRPSLPLLVIFTVGTVLMRSAGCAINDYADRDFDRYVRRTENRPITSGKIRAWEAVALAAALSLLAFLLILPLNALTKELSVAALFVAGSYPFTKRFFAIPQAYLGIAFGFGIPMAFAAIQNHVPMLAWVMLLANVFWSVAYDTEYAMVDRDDDIKIGIRTSALTFGRFDVAAIMLCYAVTLGIYVGIGVLLGFGALYWLGWAAAAGCAIYHYTLIRNRERMACFAAFRHNNWLGGALFAGIAAHYAATWF.

The next 6 helical transmembrane spans lie at 41–61 (LPLL…GCAI), 92–112 (VALA…LNAL), 133–153 (FFAI…PMAF), 160–180 (VPML…AYDT), 218–238 (LGIY…WLGW), and 267–287 (NNWL…ATWF).

This sequence belongs to the UbiA prenyltransferase family. Mg(2+) is required as a cofactor.

The protein resides in the cell inner membrane. It catalyses the reaction all-trans-octaprenyl diphosphate + 4-hydroxybenzoate = 4-hydroxy-3-(all-trans-octaprenyl)benzoate + diphosphate. The protein operates within cofactor biosynthesis; ubiquinone biosynthesis. Catalyzes the prenylation of para-hydroxybenzoate (PHB) with an all-trans polyprenyl group. Mediates the second step in the final reaction sequence of ubiquinone-8 (UQ-8) biosynthesis, which is the condensation of the polyisoprenoid side chain with PHB, generating the first membrane-bound Q intermediate 3-octaprenyl-4-hydroxybenzoate. In Paraburkholderia xenovorans (strain LB400), this protein is 4-hydroxybenzoate octaprenyltransferase.